The chain runs to 305 residues: Homoserine O-acetyltransferase (305 aa).

The active-site Acyl-thioester intermediate is the Cys-142. Substrate-binding residues include Lys-163 and Ser-192. Catalysis depends on His-235, which acts as the Proton acceptor. The active site involves Glu-237. Arg-249 lines the substrate pocket.

It belongs to the MetA family.

Its subcellular location is the cytoplasm. It catalyses the reaction L-homoserine + acetyl-CoA = O-acetyl-L-homoserine + CoA. It functions in the pathway amino-acid biosynthesis; L-methionine biosynthesis via de novo pathway; O-acetyl-L-homoserine from L-homoserine: step 1/1. Functionally, transfers an acetyl group from acetyl-CoA to L-homoserine, forming acetyl-L-homoserine. The sequence is that of Homoserine O-acetyltransferase from Cereibacter sphaeroides (strain KD131 / KCTC 12085) (Rhodobacter sphaeroides).